Here is a 126-residue protein sequence, read N- to C-terminus: Adenosine 5'-monophosphoramidase HINT1 (126 aa).

At alanine 2 the chain carries N-acetylalanine. The region spanning 18-126 (IFGKIIRKEI…GGRQMNWPPG (109 aa)) is the HIT domain. Residues lysine 21 and lysine 30 each carry the N6-acetyllysine modification. 43 to 44 (DI) contributes to the AMP binding site. Phosphoserine is present on residues serine 45 and serine 72. Residues asparagine 99, 105–107 (GQS), and 112–114 (HLH) each bind AMP. The Histidine triad motif motif lies at 110–114 (HVHLH). Histidine 112 serves as the catalytic Tele-AMP-histidine intermediate.

The protein belongs to the HINT family. Homodimer. Interacts with CDK7. Interacts with RUVBL1 and RUVBL2 and is associated with the LEF1/TCF1-CTNNB1 complex and with a KAT5 histone acetyltransferase complex. Identified in a complex with MITF and CTNNB1. Interacts with CDC34 and RBX1, and is part of a SCF (SKP2-CUL1-F-box protein) E3 ubiquitin-protein ligase complex. Interacts with SUMO1, SUMO2 and RGS17. Interacts with the Ten-1 ICD form of TENM1. Interacts with CALM1; interaction increases in the presence of calcium ions. As to expression, widely expressed.

The protein resides in the cytoplasm. Its subcellular location is the nucleus. The enzyme catalyses adenosine 5'-phosphoramidate + H2O = AMP + NH4(+). Its function is as follows. Exhibits adenosine 5'-monophosphoramidase activity, hydrolyzing purine nucleotide phosphoramidates with a single phosphate group such as adenosine 5'monophosphoramidate (AMP-NH2) to yield AMP and NH2. Hydrolyzes adenosine 5'monophosphomorpholidate (AMP-morpholidate) and guanosine 5'monophosphomorpholidate (GMP-morpholidate). Hydrolyzes lysyl-AMP (AMP-N-epsilon-(N-alpha-acetyl lysine methyl ester)) generated by lysine tRNA ligase, as well as Met-AMP, His-AMP and Asp-AMP, lysyl-GMP (GMP-N-epsilon-(N-alpha-acetyl lysine methyl ester)) and AMP-N-alanine methyl ester. Can also convert adenosine 5'-O-phosphorothioate and guanosine 5'-O-phosphorothioate to the corresponding nucleoside 5'-O-phosphates with concomitant release of hydrogen sulfide. In addition, functions as a scaffolding protein that modulates transcriptional activation by the LEF1/TCF1-CTNNB1 complex and by the complex formed with MITF and CTNNB1. Modulates p53/TP53 levels and p53/TP53-mediated apoptosis. Modulates proteasomal degradation of target proteins by the SCF (SKP2-CUL1-F-box protein) E3 ubiquitin-protein ligase complex. Also exhibits SUMO-specific isopeptidase activity, deconjugating SUMO1 from RANGAP1 and RGS17. The polypeptide is Adenosine 5'-monophosphoramidase HINT1 (HINT1) (Bos taurus (Bovine)).